A 297-amino-acid polypeptide reads, in one-letter code: MDKQEAKHINMPSPSACEHKSVEAYLFIDPLCKDCWEIEPFIIKLWLEYGKYFSIRHIVTGKVDGTNASSHKWNKPANIRFVWEKTTSLQGFSCDGKVHMQEASSTPYLVSMAIKAAELQGRKAGSKFLRKLQEYIFLENVSNPDCELLLACAKDSNIDVEEFKKDLYSASAKKAFQCDLKFTNEMHITEIPSLVFFHANSDEEGIKIAGTYSYDVYVQLLKELVKCEIEPEPLPPLEVLLEATQFISSKEVAFIYDCSKQEIERELKKLQLKRKVQMIDVKCERYWKWIAKEKDLV.

Belongs to the SpxH family. Interacts with Spx.

It is found in the cytoplasm. In terms of biological role, adapter protein required for efficient degradation of Spx by ClpXP under non-stress conditions. Interaction with Spx stabilizes Spx and exposes the C-terminus of Spx for recognition and proteolysis by ClpXP. This Bacillus cereus (strain ATCC 10987 / NRS 248) protein is ClpXP adapter protein SpxH.